The primary structure comprises 383 residues: Dynein axonemal assembly factor 11 (383 aa).

LRR repeat units follow at residues 20 to 45 (LSNL…ACRE), 46 to 66 (LEIL…QHLK), 67 to 89 (YLKY…GCEA), and 90 to 110 (LERL…ERLR). The region spanning 128 to 146 (VAGYRAYVVHALPQLRELD) is the LRRCT domain. The interval 201–244 (KGERLYGHTPEERLQMLREKEEEERRKREEQRERERSSQFGAIR) is disordered. Positions 211–239 (EERLQMLREKEEEERRKREEQRERERSSQ) form a coiled coil.

It belongs to the tilB family.

The protein localises to the cytoplasm. It localises to the cytoskeleton. The protein resides in the flagellum basal body. Functionally, involved in the regulation of the cell cycle; is required for the basal body replication and new flagellum biogenesis. The sequence is that of Dynein axonemal assembly factor 11 (dnaaf11) from Trypanosoma brucei brucei.